Here is a 91-residue protein sequence, read N- to C-terminus: MARSLKKGPFCDHHLMAKVEEAVASGNNKAVIKTWSRRSTIFPNFIGLTFGVYNGKKHIPVHVTEQMVGHKLGEFAPTRTYHGHGVDKKKK.

This sequence belongs to the universal ribosomal protein uS19 family.

Its function is as follows. Protein S19 forms a complex with S13 that binds strongly to the 16S ribosomal RNA. The chain is Small ribosomal subunit protein uS19 from Fusobacterium nucleatum subsp. nucleatum (strain ATCC 25586 / DSM 15643 / BCRC 10681 / CIP 101130 / JCM 8532 / KCTC 2640 / LMG 13131 / VPI 4355).